The following is a 195-amino-acid chain: Glycerol-3-phosphate acyltransferase (195 aa).

Helical transmembrane passes span isoleucine 2–valine 22, alanine 79–phenylalanine 99, valine 111–leucine 131, and threonine 146–leucine 166.

Belongs to the PlsY family. As to quaternary structure, probably interacts with PlsX.

Its subcellular location is the cell membrane. It catalyses the reaction an acyl phosphate + sn-glycerol 3-phosphate = a 1-acyl-sn-glycero-3-phosphate + phosphate. The protein operates within lipid metabolism; phospholipid metabolism. In terms of biological role, catalyzes the transfer of an acyl group from acyl-phosphate (acyl-PO(4)) to glycerol-3-phosphate (G3P) to form lysophosphatidic acid (LPA). This enzyme utilizes acyl-phosphate as fatty acyl donor, but not acyl-CoA or acyl-ACP. The protein is Glycerol-3-phosphate acyltransferase of Alkaliphilus metalliredigens (strain QYMF).